We begin with the raw amino-acid sequence, 631 residues long: Pescadillo homolog (631 aa).

The region spanning 321-414 (RLRNLFKGLK…QLLPTNKYFL (94 aa)) is the BRCT domain. Disordered regions lie at residues 450-469 (HAQSDDESDEEEAAQNEDDT) and 489-569 (EYKK…MVKP). Residues serine 453 and serine 457 each carry the phosphoserine modification. Acidic residues-rich tracts occupy residues 454 to 469 (DDESDEEEAAQNEDDT) and 499 to 524 (VNEDEEDTDDDFDGEQESDEEEEELD). Positions 510–541 (FDGEQESDEEEEELDEKTKRLQEEKKKMSVQS) form a coiled coil. Over residues 525-536 (EKTKRLQEEKKK) the composition is skewed to basic and acidic residues. A compositionally biased stretch (basic residues) spans 543-552 (KVHKVNKRQL). The span at 553–562 (HKAEVDEHRL) shows a compositional bias: basic and acidic residues.

It belongs to the pescadillo family.

The protein resides in the nucleus. Its subcellular location is the nucleolus. It is found in the nucleoplasm. Functionally, required for maturation of ribosomal RNAs and formation of the large ribosomal subunit. The protein is Pescadillo homolog of Drosophila mojavensis (Fruit fly).